The primary structure comprises 433 residues: Signal recognition particle 54 kDa protein (433 aa).

GTP contacts are provided by residues 106–113 (GVEGSGKT), 186–190 (DTAGR), and 244–247 (TKMD).

The protein belongs to the GTP-binding SRP family. SRP54 subfamily. As to quaternary structure, part of the signal recognition particle protein translocation system, which is composed of SRP and FtsY. Archaeal SRP consists of a 7S RNA molecule of 300 nucleotides and two protein subunits: SRP54 and SRP19.

It is found in the cytoplasm. It catalyses the reaction GTP + H2O = GDP + phosphate + H(+). Its function is as follows. Involved in targeting and insertion of nascent membrane proteins into the cytoplasmic membrane. Binds to the hydrophobic signal sequence of the ribosome-nascent chain (RNC) as it emerges from the ribosomes. The SRP-RNC complex is then targeted to the cytoplasmic membrane where it interacts with the SRP receptor FtsY. The protein is Signal recognition particle 54 kDa protein of Pyrobaculum arsenaticum (strain DSM 13514 / JCM 11321 / PZ6).